The following is a 142-amino-acid chain: Large ribosomal subunit protein uL13 (142 aa).

The protein belongs to the universal ribosomal protein uL13 family. Part of the 50S ribosomal subunit.

Its function is as follows. This protein is one of the early assembly proteins of the 50S ribosomal subunit, although it is not seen to bind rRNA by itself. It is important during the early stages of 50S assembly. The chain is Large ribosomal subunit protein uL13 from Buchnera aphidicola subsp. Schizaphis graminum (strain Sg).